The sequence spans 429 residues: UDP-N-acetylglucosamine 1-carboxyvinyltransferase (429 aa).

22-23 (KN) contacts phosphoenolpyruvate. Arg-102 is a binding site for UDP-N-acetyl-alpha-D-glucosamine. Catalysis depends on Cys-126, which acts as the Proton donor. A 2-(S-cysteinyl)pyruvic acid O-phosphothioketal modification is found at Cys-126. UDP-N-acetyl-alpha-D-glucosamine-binding positions include 131-135 (RPVDL), Asp-316, and Ile-338.

The protein belongs to the EPSP synthase family. MurA subfamily.

The protein localises to the cytoplasm. The catalysed reaction is phosphoenolpyruvate + UDP-N-acetyl-alpha-D-glucosamine = UDP-N-acetyl-3-O-(1-carboxyvinyl)-alpha-D-glucosamine + phosphate. It functions in the pathway cell wall biogenesis; peptidoglycan biosynthesis. In terms of biological role, cell wall formation. Adds enolpyruvyl to UDP-N-acetylglucosamine. The polypeptide is UDP-N-acetylglucosamine 1-carboxyvinyltransferase (Rhodopseudomonas palustris (strain BisA53)).